The sequence spans 1888 residues: METRSRKRAEATSAAPSSSSSSPPPPPSASGPTTRSKRARLSSSSSSSLAPTPPSSSTTTRSRSSRSAAAAAPMDTSTDSSGFRRGGRGNRGNNNDNSDKGKEKEHDVRIRERERERDRAREQLNMDAAAAAARSADEDDDNDSEDGNGGFMHPNMSSASSALQGLLRKLGAGLDDLLPSSGIGSASSSHLNGRMKKILSGLRAEGEEGKQVEALTQLCEMLSIGTEDSLSTFSVDSFVPVLVGLLNHESNPDIMLLAARALTHLCDVLPSSCAAVVHYGAVSCLVARLLTIEYMDLAEQSLQALKKISQEHPTACLRAGALMAVLSYLDFFSTGVQRVALSTAANMCKKLPSDASDYVMEAVPLLTNLLQYHDSKVLEYASICLTRIAEAFAPYPEKLDELCNHGLVTQAASLISTSNSGGGQASLSVSTYTGLIRLLSTCASGSPLGFRTLLLLGISSILKDILLGSGVSANASVSPALSRPADQIYEIVNLANELLPPLPEGVISLPTSTNALVKGSCQKKSSPSTSGKQEDILKISPREKLLGDQPELLQQFGLDLLPVLVQIYGSSVNGTIRHKCLSVIGKLMYFSSSEMIQSLIGDTNISSFLAGVLAWKDPQVLVPALQVAEILMEKLPETFSKVFVREGVVHAVDQLVLVGKPSHASPTDKDNDCVPGSARSRRYRRRSSNANSDGNQSEEPKNPASLTIGANHNSLDTPTASFMLRETVSSCAKAFKDKYFPSDGGDVDVGVTDDLLHLKNLCTKLTAGIDDHKVKGKGKSKASGPFLGDFSASKEEYLIGVISEILGEISKGDGVSTFEFIGSGVVAALLNYFSCGYFSKEKISELNLPKLRQEGLRRFKAFLEVALPFDGNEGKVPPMTVLIQKLQNALSSLERFPVVLSHPSRSLSGSARLSSGLSALAHPLKLRLCRASGEKTLRDYSSNIVLIDPLASLAAVEEFLWPRVQRSESALKPAAPIGNTEPGTLPSGAGVSSPSSSTPASTTRRHSSRSRSAINIGDTSKKDPVHEKGTSSSKGKGKGVMKPAQADKGPQTRSNAQKRAVLDKDTQMKPASGDSSSEDEELEISPVDIDDALVIEEDDISDDEDDDNEDVLDDSLPMCTPDKVHDVKLADSVDDDGLATSGRQMNPASGGTSGAAAARASDSIDTGIGNSYGSRGALSFAAAAMAGLGAASGRGIRGSRDLHGRTLNRSSDEPSKLIFTAAGKQLSRHLTIYQAVQRQLMLDEDDDDRFGGSDLVSSDGSRFNDIYTIMYQRPDSQVNRLSVGGASSTTPSKSTKSATTNSSVESQSHRASLLDSILQGELPCDLEKSNSTYNVLALLRVLEGLNQLCPRLRAQTLSDRFAEGKITSLDDLSTTAAKVPLDEFVNSKLTPKLARQIQDALALCSGSLPSWCYQLTRACPFLFPFQTRRQYFYSTAFGLSRALNRLQQQQGADGSGSTNEREMRIGRLQRQKVRVSRNRILDSAAKVMEMYSSQKAVLEVEYFGEVGTGLGPTLEFYTLLSHDLQKASLGMWRSSSGDKVSMQIGRDEIEDGKPSAANRDIVLAPLGLFPRPWPSTADISEGGQFHKVIEYFRLLGRVMAKALQDGRLLDVPLSTAFYKLILGQELDLHDIVLFDAELGKTLQELRVVVARKHYLEGVGGDNSSTISDLCLRGCRIEDLSLEFTLPGYPEYILRSGDEIVDITNLEEYISLVVDATVKRGVTRQIEAFRSGFNQVFDITSLQIFTPSELDYLLCGRRELWEVETLAEHIKFDHGYNAKSPAIINLLEIMGELTADQQRAFCQFVTGAPRLPPGGLAVLNPKLTIVRKHSSTSSAAANGAGASETADDDLPSVMTCANYLKLPPYSTKEIMYKKLLYAINEGQGSFDLS.

The span at M1–E10 shows a compositional bias: basic and acidic residues. Positions M1–S157 are disordered. Residues L41–S81 are compositionally biased toward low complexity. Basic and acidic residues predominate over residues N97–L124. Residues D137–D146 show a composition bias toward acidic residues. 4 ARM repeats span residues E227–D267, P270–Q310, H312–K349, and L351–E390. 4 disordered regions span residues K660–N711, A970–C1119, D1134–A1157, and R1280–Q1307. A compositionally biased stretch (low complexity) spans P986–T1002. Residues T1019–G1029 show a composition bias toward basic and acidic residues. Residues S1076 to D1113 are compositionally biased toward acidic residues. 2 stretches are compositionally biased toward low complexity: residues A1148–A1157 and A1286–S1303. Positions A1377 to G1451 are K-box. Residues M1490–S1888 enclose the HECT domain. C1855 serves as the catalytic Glycyl thioester intermediate.

It belongs to the UPL family. K-HECT subfamily. Widely expressed.

The catalysed reaction is S-ubiquitinyl-[E2 ubiquitin-conjugating enzyme]-L-cysteine + [acceptor protein]-L-lysine = [E2 ubiquitin-conjugating enzyme]-L-cysteine + N(6)-ubiquitinyl-[acceptor protein]-L-lysine.. It functions in the pathway protein modification; protein ubiquitination. Its function is as follows. Probable E3 ubiquitin-protein ligase which mediates ubiquitination and subsequent proteasomal degradation of target proteins. Involved in the repression of endoreduplication process and the cell morphogenesis in the trichomes. In Arabidopsis thaliana (Mouse-ear cress), this protein is E3 ubiquitin-protein ligase UPL3 (UPL3).